Reading from the N-terminus, the 160-residue chain is Eukaryotic translation initiation factor 5A (160 aa).

Over residues 1 to 13 (MSDSEEHHFESKA) the composition is skewed to basic and acidic residues. Positions 1-22 (MSDSEEHHFESKADAGASKTYP) are disordered. At K53 the chain carries Hypusine.

It belongs to the eIF-5A family. Lys-53 undergoes hypusination, a unique post-translational modification that consists in the addition of a butylamino group from spermidine to lysine side chain, leading to the formation of the unusual amino acid hypusine. eIF-5As are the only known proteins to undergo this modification, which is essential for their function.

Its function is as follows. Translation factor that promotes translation elongation and termination, particularly upon ribosome stalling at specific amino acid sequence contexts. Binds between the exit (E) and peptidyl (P) site of the ribosome and promotes rescue of stalled ribosome: specifically required for efficient translation of polyproline-containing peptides as well as other motifs that stall the ribosome. Acts as a ribosome quality control (RQC) cofactor by joining the RQC complex to facilitate peptidyl transfer during CAT tailing step. The polypeptide is Eukaryotic translation initiation factor 5A (TIF5A) (Zea mays (Maize)).